Here is a 268-residue protein sequence, read N- to C-terminus: Ribosomal RNA small subunit methyltransferase A (268 aa).

S-adenosyl-L-methionine contacts are provided by N23, I25, G50, E72, D97, and N116.

The protein belongs to the class I-like SAM-binding methyltransferase superfamily. rRNA adenine N(6)-methyltransferase family. RsmA subfamily.

The protein localises to the cytoplasm. The enzyme catalyses adenosine(1518)/adenosine(1519) in 16S rRNA + 4 S-adenosyl-L-methionine = N(6)-dimethyladenosine(1518)/N(6)-dimethyladenosine(1519) in 16S rRNA + 4 S-adenosyl-L-homocysteine + 4 H(+). Its function is as follows. Specifically dimethylates two adjacent adenosines (A1518 and A1519) in the loop of a conserved hairpin near the 3'-end of 16S rRNA in the 30S particle. May play a critical role in biogenesis of 30S subunits. This chain is Ribosomal RNA small subunit methyltransferase A, found in Rickettsia bellii (strain RML369-C).